Reading from the N-terminus, the 1956-residue chain is Probable cation-transporting ATPase 1 (1956 aa).

Residues 1–35 (MHLMCTGLRNEKLINDRKILYGECNLNIKSDSFII) are Cytoplasmic-facing. Residues 36–58 (LLFKEIMNPFFIFQIFAMIVWSL) form a helical membrane-spanning segment. Residues 59 to 61 (DNY) lie on the Extracellular side of the membrane. The helical transmembrane segment at 62 to 80 (IEYTISILFITSISIILEL) threads the bilayer. The Cytoplasmic portion of the chain corresponds to 81 to 407 (KNTIKNQKKI…KKELNLINDS (327 aa)). Residues 408–427 (YKFLIILIIYALFSVFILLY) form a helical membrane-spanning segment. At 428–440 (ITLSNNEYTNHII) the chain is on the extracellular side. A helical membrane pass occupies residues 441–462 (IKCLDIITDAIPPALPTTLTVG). The Cytoplasmic portion of the chain corresponds to 463-1818 (ISIAISRLKK…SLVNSFQLFK (1356 aa)). Residue D496 is the 4-aspartylphosphate intermediate of the active site. Residues 901–938 (YGNNNDDNNDDDNNNDDDNNDDNNNDDNNNDDNNDDNN) are disordered. The span at 907 to 935 (DNNDDDNNNDDDNNDDNNNDDNNNDDNND) shows a compositional bias: acidic residues. 2 residues coordinate Mg(2+): D1760 and D1764. The helical transmembrane segment at 1819–1837 (FISLYSIMQCSQVLILYSI) threads the bilayer. The Extracellular segment spans residues 1838 to 1845 (SNKLTDNQ). A helical transmembrane segment spans residues 1846-1863 (YIFIDIVTILPLSIFMCW). At 1864-1881 (TSASEKLSKNIPIGKLFS) the chain is on the cytoplasmic side. The helical transmembrane segment at 1882–1905 (FPILISIYGQIIIQLFFVMISLVV) threads the bilayer. The Extracellular portion of the chain corresponds to 1906–1928 (LMNLSFYKYDKNKVMKEKSDDTY). The helical transmembrane segment at 1929–1952 (LYKAQKYTLIYSLLFSKFVYVYIF) threads the bilayer. The Cytoplasmic segment spans residues 1953–1956 (KYKE).

The protein belongs to the cation transport ATPase (P-type) (TC 3.A.3) family. Type V subfamily.

It is found in the membrane. The enzyme catalyses ATP + H2O = ADP + phosphate + H(+). The protein is Probable cation-transporting ATPase 1 of Plasmodium falciparum.